The sequence spans 1117 residues: Leucine-rich repeats and immunoglobulin-like domains protein 3 (1117 aa).

The signal sequence occupies residues Met-1–Ala-24. An LRRNT domain is found at Leu-38–Ala-74. LRR repeat units lie at residues Trp-75–Gln-98, Ser-99–Ser-120, Asn-122–Ala-143, Ser-146–Gln-168, Leu-169–Asn-189, Thr-193–Leu-214, Gln-216–Gly-237, Ala-240–Gly-261, Asn-264–Gly-285, Met-288–Phe-309, Lys-312–Gly-333, Leu-336–Gly-357, Ser-360–Phe-382, Arg-387–Gly-408, and Thr-411–Gln-432. N-linked (GlcNAc...) asparagine glycosylation is present at Asn-156. The N-linked (GlcNAc...) asparagine glycan is linked to Asn-274. 2 N-linked (GlcNAc...) asparagine glycosylation sites follow: Asn-442 and Asn-469. Residues Ser-444 to Asp-495 form the LRRCT domain. Ig-like C2-type domains follow at residues Pro-499–Thr-598, Pro-603–Thr-692, and Pro-697–Ser-783. Disulfide bonds link Cys-520–Cys-581 and Cys-624–Cys-676. N-linked (GlcNAc...) asparagine glycans are attached at residues Asn-688 and Asn-729. Residues Cys-718 and Cys-767 are joined by a disulfide bond. Residues Val-810 to Ile-830 form a helical membrane-spanning segment. Residue Asn-1014 is glycosylated (N-linked (GlcNAc...) asparagine). Residues Asp-1019–Asn-1093 are disordered. Over residues Asp-1083–Asn-1093 the composition is skewed to basic and acidic residues.

Interacts with EGFR, ERBB2 and ERBB4 (in vitro). As to expression, widely expressed.

Its subcellular location is the cell membrane. The protein localises to the cytoplasmic vesicle membrane. In terms of biological role, plays a role in craniofacial and inner ear morphogenesis during embryonic development. Acts within the otic vesicle epithelium to control formation of the lateral semicircular canal in the inner ear, possibly by restricting the expression of NTN1. This is Leucine-rich repeats and immunoglobulin-like domains protein 3 (Lrig3) from Mus musculus (Mouse).